Consider the following 400-residue polypeptide: Cysteine desulfurase (400 aa).

Residues 71–72 (GT), asparagine 150, glutamine 178, and 198–200 (SGH) contribute to the pyridoxal 5'-phosphate site. Residue lysine 201 is modified to N6-(pyridoxal phosphate)lysine. Threonine 236 contacts pyridoxal 5'-phosphate. The active-site Cysteine persulfide intermediate is the cysteine 324. Position 324 (cysteine 324) interacts with [2Fe-2S] cluster.

This sequence belongs to the class-V pyridoxal-phosphate-dependent aminotransferase family. NifS/IscS subfamily. As to quaternary structure, homodimer. It depends on pyridoxal 5'-phosphate as a cofactor.

The catalysed reaction is (sulfur carrier)-H + L-cysteine = (sulfur carrier)-SH + L-alanine. Catalyzes the removal of elemental sulfur atoms from cysteine to produce alanine. Seems to participate in the biosynthesis of the nitrogenase metalloclusters by providing the inorganic sulfur required for the Fe-S core formation. This chain is Cysteine desulfurase, found in Nostoc sp. (strain PCC 7120 / SAG 25.82 / UTEX 2576).